The chain runs to 249 residues: Adenylate kinase (249 aa).

An ATP-binding site is contributed by 43–48; the sequence is GAGKGT. Residues 63–92 form an NMP region; the sequence is ATGDMLRAQVAAKTALGVEAKKIMDQGGLV. AMP-binding positions include Thr64, Arg69, 90 to 92, 119 to 122, and Gln126; these read GLV and GFPR. The segment at 160–197 is LID; the sequence is GRLVHPASGRSYHKLFNPPKKDMTDDVTGEPLVQRSDD. ATP contacts are provided by residues Arg161 and 170–171; that span reads SY. The disordered stretch occupies residues 177-197; sequence PPKKDMTDDVTGEPLVQRSDD. Residues Arg194 and Arg205 each contribute to the AMP site. Gln233 lines the ATP pocket.

It belongs to the adenylate kinase family. AK2 subfamily. In terms of assembly, monomer.

The protein resides in the cytoplasm. Its subcellular location is the cytosol. It localises to the mitochondrion intermembrane space. The catalysed reaction is AMP + ATP = 2 ADP. Catalyzes the reversible transfer of the terminal phosphate group between ATP and AMP. Plays an important role in cellular energy homeostasis and in adenine nucleotide metabolism. Adenylate kinase activity is critical for regulation of the phosphate utilization and the AMP de novo biosynthesis pathways. This Candida albicans (strain SC5314 / ATCC MYA-2876) (Yeast) protein is Adenylate kinase.